Here is a 467-residue protein sequence, read N- to C-terminus: MKQFMDEDFLLSNDVARTLYFDYAKDQPIFDYHCHLPPKEIAENRLFKDLTEIWLAGDHYKWRAMRSAGFDENVITGNASAYEKYQAWAKTVPLCIGNPIYHWTHLELRRPFGITDTLFGPQSADKIWQECNELLQQPEFSARGIMRRMNVKFSGTTDDPIDSLEYHKAIAEDNAFDIEVAPSWRPDKAVKIELDQFNDYLEQLERVSDTDINSFDALKKALLKRLEHFDQHGCKSADHGMEIVRFAPIPDEKELDRILRLRRSNQALTELQINQYSTALLVWLGTEYCKRNWAMQMHIGALRNNNTRMFKLLGADAGFDSIADRTFAEPLSRLLDTMDQNDELPKTILYCLNPRDNEMIATMIGNFQTGGVAGKIQFGSGWWFNDQKDGMERQLQQLSQLGLLSQFVGMLTDSRSFLSYTRHEYFRRILCEMVGKWVVNGEAPNDMNLLGNMVKNICYNNAKSYFK.

The protein belongs to the metallo-dependent hydrolases superfamily. Uronate isomerase family.

The catalysed reaction is D-glucuronate = D-fructuronate. It catalyses the reaction aldehydo-D-galacturonate = keto-D-tagaturonate. Its pathway is carbohydrate metabolism; pentose and glucuronate interconversion. The chain is Uronate isomerase from Actinobacillus succinogenes (strain ATCC 55618 / DSM 22257 / CCUG 43843 / 130Z).